A 238-amino-acid polypeptide reads, in one-letter code: MRPSQRSADAMRVVRLTRSYTKHAEGSVLVEFGDTKVICTASVEETVPSFLKGKGQGWVTAEYGMLPRSTGSRMRRESAAGKQSGRTQEIQRLIGRSLRAVTDLAKLGERQIVIDCDVIQADGGTRTASITGAYVALADAIRGLIDAGKLSATPLRDQVAAVSVGVYKGQPVLDLDYLEDSDCETDMNVVMTGSGRFVEVQGTAEGEPFSEEEMAAMLGLARKGIAELLAHQRQALNV.

Phosphate contacts are provided by residues arginine 86 and 124–126; that span reads GTR.

The protein belongs to the RNase PH family. In terms of assembly, homohexameric ring arranged as a trimer of dimers.

It carries out the reaction tRNA(n+1) + phosphate = tRNA(n) + a ribonucleoside 5'-diphosphate. Functionally, phosphorolytic 3'-5' exoribonuclease that plays an important role in tRNA 3'-end maturation. Removes nucleotide residues following the 3'-CCA terminus of tRNAs; can also add nucleotides to the ends of RNA molecules by using nucleoside diphosphates as substrates, but this may not be physiologically important. Probably plays a role in initiation of 16S rRNA degradation (leading to ribosome degradation) during starvation. The protein is Ribonuclease PH of Chromobacterium violaceum (strain ATCC 12472 / DSM 30191 / JCM 1249 / CCUG 213 / NBRC 12614 / NCIMB 9131 / NCTC 9757 / MK).